The chain runs to 350 residues: Enoyl-[acyl-carrier-protein] reductase, mitochondrial (350 aa).

A mitochondrion-targeting transit peptide spans 1–14 (MNSTRNIISLVRRY). Tyrosine 69 serves as the catalytic Proton donor. NADP(+)-binding positions include asparagine 143, 169-172 (NSMV), 192-194 (RDG), 261-264 (YGGM), 286-288 (FWL), and lysine 343.

The protein belongs to the zinc-containing alcohol dehydrogenase family. Quinone oxidoreductase subfamily. In terms of assembly, homodimer.

The protein localises to the mitochondrion. It carries out the reaction a 2,3-saturated acyl-[ACP] + NADP(+) = a (2E)-enoyl-[ACP] + NADPH + H(+). Catalyzes the NADPH-dependent reduction of trans-2-enoyl thioesters in mitochondrial fatty acid synthesis (fatty acid synthesis type II). Fatty acid chain elongation in mitochondria uses acyl carrier protein (ACP) as an acyl group carrier, but the enzyme accepts both ACP and CoA thioesters as substrates in vitro. The chain is Enoyl-[acyl-carrier-protein] reductase, mitochondrial (mecr) from Dictyostelium discoideum (Social amoeba).